The chain runs to 426 residues: NADH-quinone oxidoreductase subunit D 1 (426 aa).

The tract at residues Met1–Pro51 is disordered.

It belongs to the complex I 49 kDa subunit family. NDH-1 is composed of 14 different subunits. Subunits NuoB, C, D, E, F, and G constitute the peripheral sector of the complex.

The protein resides in the cell inner membrane. It carries out the reaction a quinone + NADH + 5 H(+)(in) = a quinol + NAD(+) + 4 H(+)(out). Functionally, NDH-1 shuttles electrons from NADH, via FMN and iron-sulfur (Fe-S) centers, to quinones in the respiratory chain. The immediate electron acceptor for the enzyme in this species is believed to be ubiquinone. Couples the redox reaction to proton translocation (for every two electrons transferred, four hydrogen ions are translocated across the cytoplasmic membrane), and thus conserves the redox energy in a proton gradient. The chain is NADH-quinone oxidoreductase subunit D 1 from Opitutus terrae (strain DSM 11246 / JCM 15787 / PB90-1).